The primary structure comprises 390 residues: Alpha-2B adrenergic receptor (390 aa).

Residues 1–25 (AIATVITFLILFTIFGNSLVILAVL) traverse the membrane as a helical segment. At 26–36 (TSRSLRAPQNL) the chain is on the cytoplasmic side. A helical membrane pass occupies residues 37–62 (FLVSLAAADIMVATLIIPFSLANELL). Residues 63–72 (GYWYFRRTWC) are Extracellular-facing. Cysteine 72 and cysteine 151 are oxidised to a cystine. Residues 73–95 (EVYLALDVLFCTSSIVHLCAISL) form a helical membrane-spanning segment. Over 96-117 (DRYWAVSRALEYNSKRTPRRIK) the chain is Cytoplasmic. A helical membrane pass occupies residues 118–140 (CIILTVWLIAAAISLPPLIYKGD). The Extracellular portion of the chain corresponds to 141–156 (QGPQPRGRPQCKLNQE). A helical membrane pass occupies residues 157-180 (AWYILSSSIGSFFAPCLIMILVYL). Residues 181–354 (RIYLIAKRSH…LTREKRFTFV (174 aa)) are Cytoplasmic-facing. Disordered regions lie at residues 191-218 (RRGP…PSAL) and 233-311 (EANG…PLQQ). The segment covering 280 to 292 (LEEEADKEEEEEC) has biased composition (acidic residues). The chain crosses the membrane as a helical span at residues 355 to 378 (LAVVIGVFVLCWFPFFFSYSLGAI). Over 379–390 (CPQHCKVPHGLF) the chain is Extracellular.

The protein belongs to the G-protein coupled receptor 1 family. Adrenergic receptor subfamily. ADRA2B sub-subfamily. As to quaternary structure, interacts with RAB26. Interacts with PPP1R9B. Interacts with GGA1, GGA2 and GGA3.

The protein localises to the cell membrane. In terms of biological role, alpha-2 adrenergic receptors mediate the catecholamine-induced inhibition of adenylate cyclase through the action of G proteins. This is Alpha-2B adrenergic receptor (ADRA2B) from Dugong dugon (Dugong).